Reading from the N-terminus, the 259-residue chain is 5'-nucleotidase SurE 1 (259 aa).

4 residues coordinate a divalent metal cation: Asp-16, Asp-17, Ser-48, and Asn-101.

It belongs to the SurE nucleotidase family. A divalent metal cation is required as a cofactor.

It localises to the cytoplasm. The enzyme catalyses a ribonucleoside 5'-phosphate + H2O = a ribonucleoside + phosphate. Its function is as follows. Nucleotidase that shows phosphatase activity on nucleoside 5'-monophosphates. This is 5'-nucleotidase SurE 1 from Burkholderia lata (strain ATCC 17760 / DSM 23089 / LMG 22485 / NCIMB 9086 / R18194 / 383).